Reading from the N-terminus, the 148-residue chain is MINTKKLLKMAKKWQQRAALKRKRISFQRSTTTTTTTTTTTSSSTAVEKGCFVVYTVDKIRFAFPLSYLNNSVFEELLKISEEEFGLRAGGPITLPFDSVFLEYLIKFIERRMDGDTEKALLMSISSARCSMQPQEQQSGYTQQLLVF.

This sequence belongs to the ARG7 family.

It localises to the cell membrane. Its function is as follows. May promote auxin-stimulated organ elongation, such as hypocotyls, stamen filaments and petals. The chain is Auxin-responsive protein SAUR65 from Arabidopsis thaliana (Mouse-ear cress).